The primary structure comprises 104 residues: Large ribosomal subunit protein bL21c (104 aa).

This sequence belongs to the bacterial ribosomal protein bL21 family. As to quaternary structure, part of the 50S ribosomal subunit.

The protein resides in the plastid. Its subcellular location is the chloroplast. Its function is as follows. This protein binds to 23S rRNA. This Pyropia yezoensis (Susabi-nori) protein is Large ribosomal subunit protein bL21c.